The following is a 332-amino-acid chain: Putative threonine dehydratase (332 aa).

Lys56 bears the N6-(pyridoxal phosphate)lysine mark.

This sequence belongs to the serine/threonine dehydratase family. Requires pyridoxal 5'-phosphate as cofactor.

The enzyme catalyses L-threonine = 2-oxobutanoate + NH4(+). It participates in amino-acid biosynthesis; L-isoleucine biosynthesis; 2-oxobutanoate from L-threonine: step 1/1. This is Putative threonine dehydratase from Sinorhizobium fredii (strain NBRC 101917 / NGR234).